The sequence spans 201 residues: Recombination protein RecR (201 aa).

A C4-type zinc finger spans residues 57–72; sequence CADCRTFTEQDVCNIC. A Toprim domain is found at 81–176; that stretch reads GQICVVESPA…SASRIAHGVP (96 aa).

Belongs to the RecR family.

Functionally, may play a role in DNA repair. It seems to be involved in an RecBC-independent recombinational process of DNA repair. It may act with RecF and RecO. The polypeptide is Recombination protein RecR (Enterobacter sp. (strain 638)).